We begin with the raw amino-acid sequence, 296 residues long: Phosphatidylglycerol--prolipoprotein diacylglyceryl transferase (296 aa).

The next 3 helical transmembrane spans lie at 17-37, 59-79, and 97-117; these read LAVR…IVVG, MMFY…VLFY, and GGMS…LFAW. A 1,2-diacyl-sn-glycero-3-phospho-(1'-sn-glycerol) is bound at residue Arg142. A run of 2 helical transmembrane segments spans residues 230-250 and 265-285; these read MGAI…TVEF and LSMG…MMIW.

It belongs to the Lgt family.

Its subcellular location is the cell inner membrane. It carries out the reaction L-cysteinyl-[prolipoprotein] + a 1,2-diacyl-sn-glycero-3-phospho-(1'-sn-glycerol) = an S-1,2-diacyl-sn-glyceryl-L-cysteinyl-[prolipoprotein] + sn-glycerol 1-phosphate + H(+). Its pathway is protein modification; lipoprotein biosynthesis (diacylglyceryl transfer). Functionally, catalyzes the transfer of the diacylglyceryl group from phosphatidylglycerol to the sulfhydryl group of the N-terminal cysteine of a prolipoprotein, the first step in the formation of mature lipoproteins. This chain is Phosphatidylglycerol--prolipoprotein diacylglyceryl transferase, found in Burkholderia pseudomallei (strain 668).